The chain runs to 317 residues: Melanocyte-stimulating hormone receptor (317 aa).

The Extracellular segment spans residues 1–37; the sequence is MPMQGAQRKLLGSLNSTPTATSNLGLAANHTGAPCLE. An N-linked (GlcNAc...) asparagine glycan is attached at N29. A helical membrane pass occupies residues 38–63; the sequence is VSIPDGLFLSLGLVSLVENVLVVAAV. At 64–72 the chain is on the cytoplasmic side; that stretch reads AKNRNLHSS. The helical transmembrane segment at 73–93 threads the bilayer; it reads MYCFICCLALSDLLVSGSNML. Topologically, residues 94-118 are extracellular; that stretch reads ETAVILLLETGALATRTSVVQQLHN. The chain crosses the membrane as a helical span at residues 119 to 140; that stretch reads TINVLTCSSMLCSLCFLGAIAV. At 141 to 163 the chain is on the cytoplasmic side; sequence DRYISIFYALRYHSIMTLPRAQR. Residues 164–183 traverse the membrane as a helical segment; it reads AIAAIWVASVLSSTLFITYY. Topologically, residues 184–191 are extracellular; it reads DHAAVLLC. A helical transmembrane segment spans residues 192–211; that stretch reads LVVFFLAMLVLMAVLYVHML. Residues 212–240 lie on the Cytoplasmic side of the membrane; it reads ARACQHAHGIIRLHKRQTPAHQGFGLRGA. The chain crosses the membrane as a helical span at residues 241–266; that stretch reads ATLTILLGIFFLCWGPFFLHLTLVVF. Residues 267–279 are Extracellular-facing; sequence CPQHLTCSCIFKN. Residues 280 to 300 form a helical membrane-spanning segment; it reads FKVFLTLIICNTIIDPLIYAF. Residues 301–317 are Cytoplasmic-facing; sequence RSQELRRTLKEVLLCSW. C315 is lipidated: S-palmitoyl cysteine.

The protein belongs to the G-protein coupled receptor 1 family. In terms of assembly, interacts with MGRN1, but does not undergo MGRN1-mediated ubiquitination; this interaction competes with GNAS-binding and thus inhibits agonist-induced cAMP production. Interacts with OPN3; the interaction results in a decrease in MC1R-mediated cAMP signaling and ultimately a decrease in melanin production in melanocytes.

The protein resides in the cell membrane. Receptor for MSH (alpha, beta and gamma) and ACTH. The activity of this receptor is mediated by G proteins which activate adenylate cyclase. Mediates melanogenesis, the production of eumelanin (black/brown) and phaeomelanin (red/yellow), via regulation of cAMP signaling in melanocytes. The protein is Melanocyte-stimulating hormone receptor (MC1R) of Saguinus oedipus (Cotton-top tamarin).